We begin with the raw amino-acid sequence, 239 residues long: Phosphoribosylaminoimidazole-succinocarboxamide synthase (239 aa).

The protein belongs to the SAICAR synthetase family.

It catalyses the reaction 5-amino-1-(5-phospho-D-ribosyl)imidazole-4-carboxylate + L-aspartate + ATP = (2S)-2-[5-amino-1-(5-phospho-beta-D-ribosyl)imidazole-4-carboxamido]succinate + ADP + phosphate + 2 H(+). Its pathway is purine metabolism; IMP biosynthesis via de novo pathway; 5-amino-1-(5-phospho-D-ribosyl)imidazole-4-carboxamide from 5-amino-1-(5-phospho-D-ribosyl)imidazole-4-carboxylate: step 1/2. The chain is Phosphoribosylaminoimidazole-succinocarboxamide synthase from Bacillus cytotoxicus (strain DSM 22905 / CIP 110041 / 391-98 / NVH 391-98).